We begin with the raw amino-acid sequence, 49 residues long: Large ribosomal subunit protein bL32c (49 aa).

A disordered region spans residues 1–23 (MTPKKRKSKSKKNLRKTNWKKKA).

This sequence belongs to the bacterial ribosomal protein bL32 family.

The protein resides in the plastid. The protein localises to the chloroplast. The polypeptide is Large ribosomal subunit protein bL32c (Oltmannsiellopsis viridis (Marine flagellate)).